The primary structure comprises 701 residues: Meprin A subunit beta (701 aa).

A signal peptide spans 1-22 (MDLWNLSWFLFLDALLVISGLA). Residues 23 to 61 (TPENFDVDGGMDQDIFDINEGLGLDLFEGDIRLDRAQIR) constitute a propeptide that is removed on maturation. Residues 23–652 (TPENFDVDGG…CEKRGSTRDT (630 aa)) are Extracellular-facing. The 195-residue stretch at 62-256 (NSIIGEKYRW…LKLNQLYNCS (195 aa)) folds into the Peptidase M12A domain. Intrachain disulfides connect cysteine 103/cysteine 255, cysteine 124/cysteine 144, and cysteine 265/cysteine 427. Residue histidine 152 coordinates Zn(2+). Residue glutamate 153 is part of the active site. Zn(2+)-binding residues include histidine 156 and histidine 162. Asparagine 218, asparagine 254, asparagine 370, asparagine 421, asparagine 436, asparagine 445, asparagine 547, and asparagine 592 each carry an N-linked (GlcNAc...) asparagine glycan. An MAM domain is found at 260-429 (SFMDSCSFEL…INLSETRCPH (170 aa)). Residues 430–585 (HIWHIRNFTQ…GDDVYILLTV (156 aa)) form the MATH domain. Serine 593 is a glycosylation site (O-linked (GalNAc...) serine). O-linked (GalNAc...) threonine glycans are attached at residues threonine 594 and threonine 599. Positions 595 to 607 (QIQLTPAPSVQDL) are required for proteolytic processing. An O-linked (GalNAc...) serine glycan is attached at serine 603. The EGF-like domain maps to 604–644 (VQDLCSKTTCKNDGVCTVRDGKAECRCQSGEDWWYMGERCE). Disulfide bonds link cysteine 608–cysteine 619, cysteine 613–cysteine 628, and cysteine 630–cysteine 643. The helical transmembrane segment at 653 to 673 (IVIAVSSTVAVFALMLIITLV) threads the bilayer. The Cytoplasmic portion of the chain corresponds to 674–701 (SVYCTRKKYRERMSSNRPNLTPQNQHAF). Threonine 694 carries the phosphothreonine modification.

In terms of assembly, homotetramer consisting of disulfide-linked beta subunits, or heterotetramer of two alpha and two beta subunits formed by non-covalent association of two disulfide-linked heterodimers. Interacts with MBL2 through its carbohydrate moiety. This interaction may inhibit its catalytic activity. Interacts with TSPAN8. Zn(2+) serves as cofactor. Phosphorylated by PKC at multiple sites of its cytoplasmic part. Phosphorylation dcreases activity at the cell surface, leading to diminished substrate cleavage. In terms of processing, N-glycosylated; contains high mannose and/or complex biantennary structures. Post-translationally, O-glycosylation protect the C-terminal region from proteolytic cleavage and diminish secretion, this seems to be specific to human. Proteolytically activated by trypsin in the intestinal lumen and kallikrein-related peptidases in other tissues. In terms of tissue distribution, the major site of expression is the brush border membrane of small intestinal and kidney epithelial cells.

The protein resides in the cell membrane. It is found in the secreted. The catalysed reaction is Hydrolysis of proteins, including azocasein, and peptides. Hydrolysis of 5-His-|-Leu-6, 6-Leu-|-Cys-7, 14-Ala-|-Leu-15 and 19-Cys-|-Gly-20 bonds in insulin B chain.. With respect to regulation, strongly inhibited by fetuin-A/AHSG. Its function is as follows. Membrane metallopeptidase that sheds many membrane-bound proteins. Exhibits a strong preference for acidic amino acids at the P1' position. Known substrates include: FGF19, VGFA, IL1B, IL18, procollagen I and III, E-cadherin, KLK7, gastrin, ADAM10, tenascin-C. The presence of several pro-inflammatory cytokine among substrates implicate MEP1B in inflammation. It is also involved in tissue remodeling due to its capability to degrade extracellular matrix components. Also cleaves the amyloid precursor protein/APP, thereby releasing neurotoxic amyloid beta peptides. The chain is Meprin A subunit beta (MEP1B) from Homo sapiens (Human).